The primary structure comprises 559 residues: Suppressor of tumorigenicity 7 protein-like (559 aa).

A run of 3 helical transmembrane segments spans residues 39 to 59 (GLANSGSTLWFLAGLGLLYAL), 83 to 103 (FYVALTGTSSLISGLIFIFEW), and 513 to 533 (LPFFIHFTAGLCSSTAMLAFL).

The protein belongs to the ST7 family. In terms of tissue distribution, ubiquitously expressed.

Its subcellular location is the membrane. This is Suppressor of tumorigenicity 7 protein-like (St7l) from Mus musculus (Mouse).